Here is a 32-residue protein sequence, read N- to C-terminus: Potassium channel toxin alpha-KTx 10.2 (32 aa).

Cystine bridges form between Cys3–Cys22, Cys8–Cys12, and Cys27–Cys29. Tyr32 is modified (tyrosine amide).

This sequence belongs to the short scorpion toxin superfamily. Potassium channel inhibitor family. Alpha-KTx 10 subfamily. As to expression, expressed by the venom gland.

The protein resides in the secreted. In terms of biological role, blocks Shaker B potassium-channels (Kv1.1/KCNA1 sub-family). The sequence is that of Potassium channel toxin alpha-KTx 10.2 from Centruroides noxius (Mexican scorpion).